A 307-amino-acid chain; its full sequence is GTPase Era (307 aa).

In terms of domain architecture, Era-type G spans Arg-7–Val-181. Residues Gly-15–Ser-22 form a G1 region. Gly-15–Ser-22 serves as a coordination point for GTP. The G2 stretch occupies residues Gln-41–Asn-45. Residues Asp-62–Gly-65 are G3. GTP-binding positions include Asp-62–Ile-66 and Asn-130–Asp-133. Residues Asn-130–Asp-133 are G4. A G5 region spans residues Val-160 to Ala-162. The region spanning Leu-212 to Glu-290 is the KH type-2 domain.

This sequence belongs to the TRAFAC class TrmE-Era-EngA-EngB-Septin-like GTPase superfamily. Era GTPase family. Monomer.

It localises to the cytoplasm. The protein resides in the cell inner membrane. An essential GTPase that binds both GDP and GTP, with rapid nucleotide exchange. Plays a role in 16S rRNA processing and 30S ribosomal subunit biogenesis and possibly also in cell cycle regulation and energy metabolism. This Nitratidesulfovibrio vulgaris (strain DSM 19637 / Miyazaki F) (Desulfovibrio vulgaris) protein is GTPase Era.